A 54-amino-acid chain; its full sequence is Large ribosomal subunit protein bL33B (54 aa).

The protein belongs to the bacterial ribosomal protein bL33 family.

The polypeptide is Large ribosomal subunit protein bL33B (Mycobacterium sp. (strain KMS)).